The primary structure comprises 437 residues: Coiled-coil domain-containing protein 78 (437 aa).

Coiled coils occupy residues 83 to 114 (HLRE…LHGN), 147 to 287 (EELK…QRQE), and 360 to 408 (QRLQ…YKQE).

Belongs to the CCDC78 family.

Its subcellular location is the cytoplasm. The protein localises to the cytoskeleton. It is found in the microtubule organizing center. It localises to the centrosome. The protein resides in the centriole. Its subcellular location is the perinuclear region. The protein localises to the cell membrane. It is found in the sarcolemma. It localises to the sarcoplasmic reticulum. Its function is as follows. Component of the deuterosome, a structure that promotes de novo centriole amplification in multiciliated cells that can generate more than 100 centrioles. Deuterosome-mediated centriole amplification occurs in terminally differentiated multiciliated cells (G1/0) and not in S phase. Essential for centriole amplification and is required for CEP152 localization to the deuterosome. This Mus musculus (Mouse) protein is Coiled-coil domain-containing protein 78 (Ccdc78).